The primary structure comprises 944 residues: MSDYKSTLNLPETGFPMRGDLAKREPGMLARWTDDDLYGIIRAAKKGKKTFILHDGPPYANGSIHIGHSVNKILKDIIVKSKGLSGFDSPYVPGWDCHGLPIELKVEQEFGKPGEKFTAAEFRAKCREYAATQVDGQRKDFIRLGVLGDWSHPYLTMDFKTEANIIRALGRIIKNGHLHKGAKPVHWCVDCRSALAEAEVEYYDKTSPSIDVAFRAVDQDAVKAKFGLPGVSGPVSLVIWTTTPWTLPANRAISLAPDFDYALVQIDGQAVILAKDLVESVIQRIGAAEYTILGTVKGAELELLRFTHPFMGFDVPAILGDHVTLDAGTGAVHTAPGHGPDDYVIGQKYGLETANPVGPDGAYLPGTYPTLDGVNVFKANDIVIELLKEKGALLHVEKMQHSYPCCWRHKTPIIFRATPQWFVSMDKEGLRQQSLKEIKGVQWIPDWGQARIESMVANRPDWCISRQRTWGVPMSLFVHKETQELLPIERTLAAMEEVAKRVEVDGIQAWWDLDPKEILGEDADQYEKVPDTLDVWFDSGSTSYSVVDARPEFAGHAADMYLEGSDQHRGWFMSSLMISVAMKGKAPYRQVLTHGFTVDGQGRKMSKSIGNTVSPQDVMNKLGADILRLWVASTDYTGEMAVSDEILKRAADSYRRIRNTARFLLANLNGFNPATDMVKPEEMVVLDRWAVGCAKTAQQEILKAYEAYDFHEVVQRLMRFCSVEMGSFYLDIIKDRQYTAKADSVARRSCQTALYHIAEALVRWMAPIMSFTADEIWGYLPGEREKYVFTGEWYDGLFGLEENEEFNDAFWDDVRYIKDQVNKELENQKANGIKSNLEAKVTLKYADDANGTIKKLKLLGEEVRFIFITSQFVISEQAGGIDDENIQYNAGNTTVQAVVTRAEGDKCPRCWHYTTDVGKVAEHADICGRCVSNIAGNGEQRKFA.

A 'HIGH' region motif is present at residues 58 to 68 (PYANGSIHIGH). Glutamate 563 is a binding site for L-isoleucyl-5'-AMP. A 'KMSKS' region motif is present at residues 604-608 (KMSKS). Lysine 607 lines the ATP pocket. Residues cysteine 907, cysteine 910, cysteine 927, and cysteine 930 each coordinate Zn(2+).

Belongs to the class-I aminoacyl-tRNA synthetase family. IleS type 1 subfamily. Monomer. The cofactor is Zn(2+).

It is found in the cytoplasm. The catalysed reaction is tRNA(Ile) + L-isoleucine + ATP = L-isoleucyl-tRNA(Ile) + AMP + diphosphate. Its function is as follows. Catalyzes the attachment of isoleucine to tRNA(Ile). As IleRS can inadvertently accommodate and process structurally similar amino acids such as valine, to avoid such errors it has two additional distinct tRNA(Ile)-dependent editing activities. One activity is designated as 'pretransfer' editing and involves the hydrolysis of activated Val-AMP. The other activity is designated 'posttransfer' editing and involves deacylation of mischarged Val-tRNA(Ile). This Salmonella typhi protein is Isoleucine--tRNA ligase.